The sequence spans 113 residues: Parvalbumin beta (113 aa).

Alanine 1 is modified (N-acetylalanine). A glycan (S-linked (Glc) cysteine) is linked at cysteine 18. EF-hand domains follow at residues 38-73 (FSAD…FAAD) and 77-112 (LTDA…WGAK). Ca(2+)-binding residues include aspartate 51, aspartate 53, glutamate 55, phenylalanine 57, glutamate 59, glutamate 62, aspartate 90, aspartate 92, aspartate 94, lysine 96, and glutamate 101.

Belongs to the parvalbumin family. In terms of tissue distribution, muscle (at protein level).

Its function is as follows. In muscle, parvalbumin is thought to be involved in relaxation after contraction. It binds two calcium ions. In Gadus morhua subsp. callarias (Baltic cod), this protein is Parvalbumin beta.